Consider the following 457-residue polypeptide: Cysteine desulfurase (457 aa).

Residues Ala-127, Thr-128, Gln-235, Ser-255, and His-257 each contribute to the pyridoxal 5'-phosphate site. Residue Lys-258 is modified to N6-(pyridoxal phosphate)lysine. Thr-295 serves as a coordination point for pyridoxal 5'-phosphate. The Cysteine persulfide intermediate role is filled by Cys-381. Cys-381 contributes to the [2Fe-2S] cluster binding site. Cys-381 contacts Zn(2+). The residue at position 381 (Cys-381) is a Cysteine persulfide.

Belongs to the class-V pyridoxal-phosphate-dependent aminotransferase family. NifS/IscS subfamily. As to quaternary structure, homodimer. Component of the mitochondrial core iron-sulfur cluster (ISC) complex composed of NFS1, LYRM4, NDUFAB1, ISCU, FXN, and FDX2; this complex is a heterohexamer containing two copies of each monomer. Component of cyteine desulfurase complex composed of NFS1, LYRM4 and NDUFAB1; this complex contributes to the activation of cysteine desulfurase activity and NFS1 stabilization. Interacts (homodimer form) with ISCU (D-state); each monomer interacts with the C-terminal regions of each NFS1 monomer. Interacts with HSPA9. Interacts (via homodimer form) with FDX2. Interacts (via homodimer form) with FXN. Interacts with LYRM4. Component of a complex composed of FXN, NFS1, LYRM4 and ISCU. Monomer. Homodimer. Oligomer. Interacts with ISCU. Component of the cysteine desulfurase complex composed of NFS1 and LYRM4; this complex contributes to the activation of cysteine desulfurase activity. Interacts with MOCS3. Pyridoxal 5'-phosphate is required as a cofactor. N-gluconoylated. Post-translationally, cysteine persulfide intermediate is reduced by thiol-containing molecules like glutathione and L-cysteine. Persulfide reduction is a rate-limiting step of cysteine desulfurase catalytic cycle.

It is found in the mitochondrion. The protein localises to the cytoplasm. It localises to the nucleus. Its subcellular location is the cytoskeleton. The protein resides in the microtubule organizing center. It is found in the centrosome. It catalyses the reaction (sulfur carrier)-H + L-cysteine = (sulfur carrier)-SH + L-alanine. It carries out the reaction L-cysteinyl-[cysteine desulfurase] + L-cysteine = S-sulfanyl-L-cysteinyl-[cysteine desulfurase] + L-alanine. With respect to regulation, active only in complex with LYRM4. Its function is as follows. Cysteine desulfurase, of the core iron-sulfur cluster (ISC) assembly complex, that catalyzes the desulfuration of L-cysteine to L-alanine, as component of the cysteine desulfurase complex leading to the formation of a cysteine persulfide intermediate at the active site cysteine residue and participates in the [2Fe-2S] clusters assembly on the scaffolding protein ISCU. The persulfide is then transferred on the flexible Cys loop from the catalytic site of NFS1 to the surface of NFS1. After the NFS1-linked persulfide sulfur is transferred to one of the conserved Cys residues of the scaffold, a reaction assisted by FXN. The core iron-sulfur cluster (ISC) assembly complex is involved in the de novo synthesis of a [2Fe-2S] cluster, the first step of the mitochondrial iron-sulfur protein biogenesis. This process is initiated by the cysteine desulfurase complex (NFS1:LYRM4:NDUFAB1) that produces persulfide which is delivered on the scaffold protein ISCU in a FXN-dependent manner. Then this complex is stabilized by FDX2 which provides reducing equivalents to accomplish the [2Fe-2S] cluster assembly. Finally, the [2Fe-2S] cluster is transferred from ISCU to chaperone proteins, including HSCB, HSPA9 and GLRX5. May catalyze the desulfuration of L-cysteine to L-alanine as component of the cysteine desulfurase complex (NFS1:LYRM4), leading to the formation of a cysteine persulfide intermediate. Acts as a sulfur donor for MOCS3 by transferring the sulfur of the cysteine persulfide intermediate on MOCS3. The polypeptide is Cysteine desulfurase (Pongo abelii (Sumatran orangutan)).